Consider the following 302-residue polypeptide: Fluoroacetate dehalogenase (302 aa).

The 239-residue stretch at 32 to 270 (PPLLLLHGFP…LDVWRKWASD (239 aa)) folds into the AB hydrolase-1 domain. The Nucleophile role is filled by Asp-110. The fluoroacetate site is built by Arg-111, Arg-114, His-155, Trp-156, and Tyr-219. Residue His-280 is the Proton acceptor of the active site.

It belongs to the AB hydrolase superfamily. Epoxide hydrolase family. Homodimer.

The enzyme catalyses a haloacetate + H2O = a halide anion + glycolate + H(+). The catalysed reaction is fluoroacetate + H2O = fluoride + glycolate + H(+). It catalyses the reaction chloroacetate + H2O = glycolate + chloride + H(+). Its function is as follows. Catalyzes the hydrolytic defluorination of fluoroacetate to produce glycolate. Has lower activity towards chloroacetate and bromoacetate. The sequence is that of Fluoroacetate dehalogenase from Rhodopseudomonas palustris (strain ATCC BAA-98 / CGA009).